The sequence spans 513 residues: MASVLSRRLGKRSLLGARVLGPSASEGPSAAPPSEPLLEGAAPQPFTTSDDTPCQEQPKEVLKAPSTSGLQQVAFQPGQKVYVWYGGQECTGLVEQHSWMEGQVTVWLLEQKLQVCCRVEEVWLAELQGPCPQAPPLEPGAQALAYRPVSRNIDVPKRKSDAVEMDEMMAAMVLTSLSCSPVVQSPPGTEANFSASRAACDPWKESGDISDSGSSTTSGHWSGSSGVSTPSPPHPQASPKYLGDAFGSPQTDHGFETDPDPFLLDEPAPRKRKNSVKVMYKCLWPNCGKVLRSIVGIKRHVKALHLGDTVDSDQFKREEDFYYTEVQLKEESAAAAAAAAAGTPVPGTPTSEPAPTPSMTGLPLSALPPPLHKAQSSGPEHPGPESSLPSGALSKSAPGSFWHIQADHAYQALPSFQIPVSPHIYTSVSWAAAPSAACSLSPVRSRSLSFSEPQQPAPAMKSHLIVTSPPRAQSGARKARGEAKKCRKVYGIEHRDQWCTACRWKKACQRFLD.

The segment covering 17-29 has biased composition (low complexity); sequence ARVLGPSASEGPS. The tract at residues 17–56 is disordered; that stretch reads ARVLGPSASEGPSAAPPSEPLLEGAAPQPFTTSDDTPCQE. Residues 45-55 show a composition bias toward polar residues; sequence PFTTSDDTPCQ. The short motif at 165-174 is the Nuclear export signal element; it reads MDEMMAAMVL. Residues 204-269 form a disordered region; sequence KESGDISDSG…DPFLLDEPAP (66 aa). The span at 209-229 shows a compositional bias: low complexity; it reads ISDSGSSTTSGHWSGSSGVST. At S248 the chain carries Phosphoserine. A C2H2-type zinc finger spans residues 280–305; that stretch reads YKCLWPNCGKVLRSIVGIKRHVKALH. Residues 335 to 394 are disordered; sequence AAAAAAAGTPVPGTPTSEPAPTPSMTGLPLSALPPPLHKAQSSGPEHPGPESSLPSGALS. The span at 348 to 359 shows a compositional bias: polar residues; sequence TPTSEPAPTPSM. A phosphoserine mark is found at S376 and S449. A compositionally biased stretch (low complexity) spans 376–391; the sequence is SSGPEHPGPESSLPSG.

Interacts with repression-mediating E2 binding site P2 of human papillomavirus type 8 (HPV8). Widely expressed.

Its subcellular location is the cytoplasm. The protein localises to the nucleus. In terms of biological role, plays a role in papillomavirus genes transcription. This Homo sapiens (Human) protein is Zinc finger protein 395 (ZNF395).